A 525-amino-acid chain; its full sequence is Eukaryotic translation initiation factor 3 subunit L (525 aa).

The span at 1 to 19 (MYTQADEYDGGDAGYEDDY) shows a compositional bias: acidic residues. The tract at residues 1–21 (MYTQADEYDGGDAGYEDDYSG) is disordered. Positions 296-502 (DAIRCFSSVL…IHIADTKVDR (207 aa)) constitute a PCI domain.

The protein belongs to the eIF-3 subunit L family. In terms of assembly, component of the eukaryotic translation initiation factor 3 (eIF-3) complex.

It localises to the cytoplasm. Its function is as follows. Component of the eukaryotic translation initiation factor 3 (eIF-3) complex, which is involved in protein synthesis of a specialized repertoire of mRNAs and, together with other initiation factors, stimulates binding of mRNA and methionyl-tRNAi to the 40S ribosome. The eIF-3 complex specifically targets and initiates translation of a subset of mRNAs involved in cell proliferation. The polypeptide is Eukaryotic translation initiation factor 3 subunit L (Nematostella vectensis (Starlet sea anemone)).